The chain runs to 185 residues: Ribosome maturation factor RimM (185 aa).

The PRC barrel domain occupies 96-171 (EDEFYHSDLL…VITIDPPEDV (76 aa)). Residues 165–185 (IDPPEDVGSKAEEEGGGAPDD) are disordered.

The protein belongs to the RimM family. Binds ribosomal protein uS19.

Its subcellular location is the cytoplasm. In terms of biological role, an accessory protein needed during the final step in the assembly of 30S ribosomal subunit, possibly for assembly of the head region. Essential for efficient processing of 16S rRNA. May be needed both before and after RbfA during the maturation of 16S rRNA. It has affinity for free ribosomal 30S subunits but not for 70S ribosomes. In Maricaulis maris (strain MCS10) (Caulobacter maris), this protein is Ribosome maturation factor RimM.